The chain runs to 72 residues: Small ribosomal subunit protein bS20 (72 aa).

The protein belongs to the bacterial ribosomal protein bS20 family.

Binds directly to 16S ribosomal RNA. The polypeptide is Small ribosomal subunit protein bS20 (rpsT) (Klebsiella pneumoniae).